A 473-amino-acid polypeptide reads, in one-letter code: 3-isopropylmalate dehydratase large subunit (473 aa).

3 residues coordinate [4Fe-4S] cluster: Cys-351, Cys-414, and Cys-417.

Belongs to the aconitase/IPM isomerase family. LeuC type 1 subfamily. In terms of assembly, heterodimer of LeuC and LeuD. [4Fe-4S] cluster serves as cofactor.

The enzyme catalyses (2R,3S)-3-isopropylmalate = (2S)-2-isopropylmalate. Its pathway is amino-acid biosynthesis; L-leucine biosynthesis; L-leucine from 3-methyl-2-oxobutanoate: step 2/4. Functionally, catalyzes the isomerization between 2-isopropylmalate and 3-isopropylmalate, via the formation of 2-isopropylmaleate. The polypeptide is 3-isopropylmalate dehydratase large subunit (Acidovorax ebreus (strain TPSY) (Diaphorobacter sp. (strain TPSY))).